A 510-amino-acid chain; its full sequence is MDAKEFREFGKAAIDYIADYLENIRDDDVLPNVEPGYLLDLLPTEMPEEPEAWKDVLGDISRVIKPGLTHWQSPHMHAYYPTSTSYPSIVGEMLASGFGVIGFSWICSPACTELEVVVMDWLAKFLKLPAHFQHASDGPGGGVIQGSASEAVLVAVLAAREQAVANYRESHPELSESEVRGRLVAYSSDQSNSCIEKAGVLAAMPIRLLPAGEDFVLRGDTLRGAIEEDVAAGRIPVICVATLGTTGTCAYDDIESLSAVCEEFKVWLHVDAAYAGGAFALEECSDLRKGLDRVDSLNFNLHKFMLVNFDCSAMWLRDANKVVDSFNVDRIYLKHKHEGQSQIPDFRHWQIPLGRRFRALKVWITFRTLGAEGLRNHVRKHIELAKQFEQLVLKDSRFELVAPRALGLVCFRPKGDNEITTQLLQRLMDRKKIYMVKAEHAGRQFLRFVVCGMDTKASDIDFAWQEIESQLTDLQAEQSLVARKSGNVGDLAQHFQIHLSTENATHEKSQ.

Asparagine 192 is an active-site residue. An N6-(pyridoxal phosphate)lysine modification is found at lysine 303.

Belongs to the group II decarboxylase family. Requires pyridoxal 5'-phosphate as cofactor.

The enzyme catalyses L-dopa + O2 + H2O + H(+) = 3,4-dihydroxyphenylacetaldehyde + H2O2 + NH4(+) + CO2. Its function is as follows. Catalyzes the decarboxylation-oxidative deamination of L-3,4-dihydroxyphenylalanine (L-DOPA) to 3,4-dihydroxylphenylacetaldehyde (DHPAA). Involved in cuticle development. Probably responsible for the protein cross-linking during the development of flexible cuticles. The sequence is that of 3,4-dihydroxyphenylacetaldehyde synthase (amd) from Drosophila melanogaster (Fruit fly).